A 154-amino-acid chain; its full sequence is UPF0756 membrane protein BPUM_2558 (154 aa).

The next 4 helical transmembrane spans lie at 8-28 (FLVL…ILAV), 54-74 (WGVT…DIGF), 87-107 (WIAL…IVLL), and 117-137 (LVFG…GPLI).

The protein belongs to the UPF0756 family.

Its subcellular location is the cell membrane. The protein is UPF0756 membrane protein BPUM_2558 of Bacillus pumilus (strain SAFR-032).